The sequence spans 860 residues: Valine--tRNA ligase (860 aa).

Residues 53–63 (PNLTGILHIGH) carry the 'HIGH' region motif. Residues 527-531 (KMSKS) carry the 'KMSKS' region motif. Lys-530 provides a ligand contact to ATP. The stretch at 794-860 (QDKTKIVDKL…LKQDKLNSLK (67 aa)) forms a coiled coil.

The protein belongs to the class-I aminoacyl-tRNA synthetase family. ValS type 1 subfamily. In terms of assembly, monomer.

It is found in the cytoplasm. The enzyme catalyses tRNA(Val) + L-valine + ATP = L-valyl-tRNA(Val) + AMP + diphosphate. In terms of biological role, catalyzes the attachment of valine to tRNA(Val). As ValRS can inadvertently accommodate and process structurally similar amino acids such as threonine, to avoid such errors, it has a 'posttransfer' editing activity that hydrolyzes mischarged Thr-tRNA(Val) in a tRNA-dependent manner. The chain is Valine--tRNA ligase from Mycoplasmoides gallisepticum (strain R(low / passage 15 / clone 2)) (Mycoplasma gallisepticum).